Here is a 259-residue protein sequence, read N- to C-terminus: Triosephosphate isomerase (259 aa).

Residue 10-12 participates in substrate binding; it reads NWK. H100 functions as the Electrophile in the catalytic mechanism. E172 serves as the catalytic Proton acceptor. Residues G178, S218, and 239–240 contribute to the substrate site; that span reads GG.

The protein belongs to the triosephosphate isomerase family. As to quaternary structure, homodimer.

The protein localises to the cytoplasm. The enzyme catalyses D-glyceraldehyde 3-phosphate = dihydroxyacetone phosphate. It participates in carbohydrate biosynthesis; gluconeogenesis. It functions in the pathway carbohydrate degradation; glycolysis; D-glyceraldehyde 3-phosphate from glycerone phosphate: step 1/1. In terms of biological role, involved in the gluconeogenesis. Catalyzes stereospecifically the conversion of dihydroxyacetone phosphate (DHAP) to D-glyceraldehyde-3-phosphate (G3P). In Corynebacterium glutamicum (strain ATCC 13032 / DSM 20300 / JCM 1318 / BCRC 11384 / CCUG 27702 / LMG 3730 / NBRC 12168 / NCIMB 10025 / NRRL B-2784 / 534), this protein is Triosephosphate isomerase.